The primary structure comprises 750 residues: Nibrin (750 aa).

One can recognise an FHA domain in the interval 24–83 (YIVGRKNCAILIENDQSISRNHAVLRVNFPVTSLSQTDEIPTLTIKDNSKYGTFINEEKM). 2 consecutive BRCT domains span residues 105 to 181 (KFRV…SEFL) and 224 to 315 (GKTF…LAVI). The tract at residues 111 to 328 (EPLVVCSSCL…TESYCNPQGQ (218 aa)) is mediates interaction with SP100. The interval 221–403 (IFKGKTFVFL…SRKLLQGTCN (183 aa)) is interaction with MTOR, MAPKAP1 and RICTOR. At T337 the chain carries Phosphothreonine. S343 is subject to Phosphoserine; by ATM. A phosphoserine mark is found at S347 and S433. Disordered regions lie at residues 429 to 479 (NYQL…SSCK) and 494 to 550 (QPAG…RKRK). K436 participates in a covalent cross-link: Glycyl lysine isopeptide (Lys-Gly) (interchain with G-Cter in ubiquitin). The span at 446-457 (WSSQQQLNSIKN) shows a compositional bias: polar residues. Positions 461-467 (PCSRKRE) match the Nuclear localization signal motif. Residues 502–514 (KSKDHESQSETLD) are compositionally biased toward basic and acidic residues. 2 positions are modified to phosphoserine: S508 and S517. Residue K528 forms a Glycyl lysine isopeptide (Lys-Gly) (interchain with G-Cter in SUMO2) linkage. Residues 540-550 (STEDLRARKRK) are compositionally biased toward basic and acidic residues. Residues K569 and K580 each participate in a glycyl lysine isopeptide (Lys-Gly) (interchain with G-Cter in SUMO2) cross-link. Positions 581 to 599 (QEADVSIRKKPRMDAERNQ) are enriched in basic and acidic residues. Residues 581–622 (QEADVSIRKKPRMDAERNQHLNGGPVPESNSALQEDETGKKD) form a disordered region. Glycyl lysine isopeptide (Lys-Gly) (interchain with G-Cter in ubiquitin) cross-links involve residues K683, K687, and K732. The FxF/Y motif motif lies at 737–746 (ADDLFRYNPN).

Belongs to the Nibrin family. As to quaternary structure, component of the MRN complex composed of two heterodimers RAD50 and MRE11 associated with a single NBN. The MRN complexes dimerize on DNA to form joined MRN-MRN oligomers required for DNA double-strand break repair. The MRN complexes dimerize on DNA to form joined MRN-MRN oligomers required for DNA double-strand break repair. As part of the MRN complex, interacts with MCM9; the interaction recruits the complex to DNA repair sites. Component of the BASC complex, at least composed of BRCA1, MSH2, MSH6, MLH1, ATM, BLM, RAD50, MRE11 and NBN. Interacts with histone H2AX; this requires phosphorylation of H2AX on 'Ser-139' and promotes NBN recruitment to DNA damage sites. Interacts with (phosphorylated) MDC1; promoting NBN recruitment to DNA damage sites. Interacts with (phosphorylated) RAD17; promoting NBN recruitment to DNA damage sites. Interacts (via FxF/Y motif) with ATM. Interacts with HJURP. Interacts with INTS3. Interacts with KPNA2. Interacts with TERF2; interaction is disrupted upon NBN phosphorylation by CDK2. Interacts with (phosphorylated) RBBP8/CtIP; the interaction links the role of the MRN complex in DNA double-strand break sensing to resection. Interacts with SP100; recruits NBN to PML bodies. Interacts with ATF2. Interacts with MTOR, MAPKAP1 isoform 2 and RICTOR; indicative for an association with the mTORC2 complex. Interacts with MRNIP. Interacts with UFL1; promoting UFL1 recruitment to double-strand breaks following DNA damage. Interacts with CYREN (via XLF motif). In terms of processing, phosphorylated by ATM in response of ionizing radiation, and such phosphorylation is responsible intra-S phase checkpoint control and telomere maintenance. Phosphorylated at Ser-433 by CDK2 in S/G2 phases abolishes interaction with TERF2, enabling DCLRE1B/Apollo recruitment to telomeres. Phosphorylation at Ser-433 in response to dysfunctional telomeres promotes non-homologous end joining repair at telomeres, while dephosphorylation by PPP1CA promotes microhomology-mediated end-joining (MMEJ) repair. Post-translationally, ubiquitinated at Lys-436 via 'Lys-6'-linked ubiquitin chains by RNF8, promoting NBN recruitment to DNA double-strand breaks (DSBs). Ubiquitinated at Lys-687 via 'Lys-63'-linked ubiquitin chains by PELI1: ubiquitination takes place following PELI1 phosphorylation and promotes ATM activation and DNA repair. Ubiquitinated at Lys-732 via 'Lys-63'-linked ubiquitin chains by the SCF(SKP2) complex: ubiquitination takes place following SKP2 phosphorylation and promotes ATM activation and DNA repair. In terms of tissue distribution, present at approximately equal levels in the heart at fetal day 17, at relatively constant levels at postnatal days 10, 17 and 21 and at slightly lower levels in the adult heart. Barely detectable in the brain. Not detected in kidney, very low levels in liver and skeletal muscle and moderate levels in heart, lung and brain (at protein level).

Its subcellular location is the nucleus. The protein localises to the chromosome. The protein resides in the PML body. It is found in the telomere. Its function is as follows. Component of the MRN complex, which plays a central role in double-strand break (DSB) repair, DNA recombination, maintenance of telomere integrity and meiosis. The MRN complex is involved in the repair of DNA double-strand breaks (DSBs) via homologous recombination (HR), an error-free mechanism which primarily occurs during S and G2 phases. The complex (1) mediates the end resection of damaged DNA, which generates proper single-stranded DNA, a key initial steps in HR, and is (2) required for the recruitment of other repair factors and efficient activation of ATM and ATR upon DNA damage. The MRN complex possesses single-strand endonuclease activity and double-strand-specific 3'-5' exonuclease activity, which are provided by MRE11, to initiate end resection, which is required for single-strand invasion and recombination. Within the MRN complex, NBN acts as a protein-protein adapter, which specifically recognizes and binds phosphorylated proteins, promoting their recruitment to DNA damage sites. Recruits MRE11 and RAD50 components of the MRN complex to DSBs in response to DNA damage. Promotes the recruitment of PI3/PI4-kinase family members ATM, ATR, and probably DNA-PKcs to the DNA damage sites, activating their functions. Mediates the recruitment of phosphorylated RBBP8/CtIP to DSBs, leading to cooperation between the MRN complex and RBBP8/CtIP to initiate end resection. RBBP8/CtIP specifically promotes the endonuclease activity of the MRN complex to clear DNA ends containing protein adducts. The MRN complex is also required for the processing of R-loops. NBN also functions in telomere length maintenance via its interaction with TERF2: interaction with TERF2 during G1 phase preventing recruitment of DCLRE1B/Apollo to telomeres. NBN also promotes DNA repair choice at dysfunctional telomeres: NBN phosphorylation by CK2 promotes non-homologous end joining repair at telomeres, while unphosphorylated NBN promotes microhomology-mediated end-joining (MMEJ) repair. Enhances AKT1 phosphorylation possibly by association with the mTORC2 complex. This Rattus norvegicus (Rat) protein is Nibrin (Nbn).